The primary structure comprises 318 residues: Ribosome biogenesis protein RLP7 (318 aa).

2 disordered regions span residues 1–49 (MSQP…NRFV) and 101–121 (AGSK…DEED). Basic and acidic residues predominate over residues 19–40 (ADRTRLEKQELAKKRKEQEEKQ). Over residues 110 to 121 (ELQDVDEEDEED) the composition is skewed to acidic residues.

It belongs to the universal ribosomal protein uL30 family.

The protein resides in the nucleus. It is found in the nucleolus. In terms of biological role, involved in the biogenesis of the 60S ribosomal subunit. May act as a specificity factor that binds precursor rRNAs and tethers the enzymes that carry out the early 5' to 3' exonucleolytic reactions that generate the mature rRNAs. This Kluyveromyces lactis (strain ATCC 8585 / CBS 2359 / DSM 70799 / NBRC 1267 / NRRL Y-1140 / WM37) (Yeast) protein is Ribosome biogenesis protein RLP7 (RLP7).